Consider the following 143-residue polypeptide: MEIRVFRQDDFEEVITLWERCDLLNPGVDPEVDIERKLTHDPDLFLVAEVVGEVVGTIMGGYDGHRGSAYYLGVHPEFRGRGIANALIARLEKKLIARGCPKIVLIVPEDNDATIYMCEKLEYEDRHQESVIFSKRLIVDQEY.

Residues 1 to 138 enclose the N-acetyltransferase domain; the sequence is MEIRVFRQDD…ESVIFSKRLI (138 aa).

It belongs to the acetyltransferase family. YpeA subfamily.

This is Acetyltransferase plu1384 from Photorhabdus laumondii subsp. laumondii (strain DSM 15139 / CIP 105565 / TT01) (Photorhabdus luminescens subsp. laumondii).